The chain runs to 454 residues: tRNA modification GTPase MnmE (454 aa).

3 residues coordinate (6S)-5-formyl-5,6,7,8-tetrahydrofolate: arginine 23, glutamate 80, and lysine 120. In terms of domain architecture, TrmE-type G spans 216 to 377; it reads GMKVVIAGRP…LRNHLKQSMG (162 aa). Asparagine 226 serves as a coordination point for K(+). Residues 226–231, 245–251, 270–273, 335–338, and 358–360 each bind GTP; these read NAGKSS, TDIAGTT, DTAG, NKAD, and SAR. Serine 230 is a binding site for Mg(2+). Positions 245, 247, and 250 each coordinate K(+). Mg(2+) is bound at residue threonine 251. A (6S)-5-formyl-5,6,7,8-tetrahydrofolate-binding site is contributed by lysine 454.

It belongs to the TRAFAC class TrmE-Era-EngA-EngB-Septin-like GTPase superfamily. TrmE GTPase family. As to quaternary structure, homodimer. Heterotetramer of two MnmE and two MnmG subunits. K(+) is required as a cofactor.

The protein localises to the cytoplasm. Its function is as follows. Exhibits a very high intrinsic GTPase hydrolysis rate. Involved in the addition of a carboxymethylaminomethyl (cmnm) group at the wobble position (U34) of certain tRNAs, forming tRNA-cmnm(5)s(2)U34. The sequence is that of tRNA modification GTPase MnmE from Escherichia coli (strain 55989 / EAEC).